Consider the following 632-residue polypeptide: MAU2 chromatid cohesion factor homolog (632 aa).

TPR repeat units follow at residues 453–486 (GGFYYVQGLHAFHKNSFHEAKRFLRETLKMANAE) and 493–526 (SCSLVLLSHVFLSIGNSKESMNMVTPAMQLASKI).

This sequence belongs to the SCC4/mau-2 family. As to quaternary structure, interacts with Nipped-B to form the cohesin loading complex.

The protein localises to the nucleus. It localises to the nucleoplasm. Required for association of the cohesin complex with chromatin during interphase. Plays a role in sister chromatid cohesion and normal progression through prometaphase. This chain is MAU2 chromatid cohesion factor homolog, found in Drosophila yakuba (Fruit fly).